We begin with the raw amino-acid sequence, 503 residues long: 2,3-bisphosphoglycerate-independent phosphoglycerate mutase (503 aa).

The Mn(2+) site is built by Asp10 and Ser60. Ser60 serves as the catalytic Phosphoserine intermediate. Substrate is bound by residues His121, 150–151 (RD), Arg181, Arg187, 256–259 (RPDR), and Lys330. Residues Asp396, His400, Asp437, His438, and His455 each contribute to the Mn(2+) site.

This sequence belongs to the BPG-independent phosphoglycerate mutase family. Monomer. Requires Mn(2+) as cofactor.

The enzyme catalyses (2R)-2-phosphoglycerate = (2R)-3-phosphoglycerate. The protein operates within carbohydrate degradation; glycolysis; pyruvate from D-glyceraldehyde 3-phosphate: step 3/5. Functionally, catalyzes the interconversion of 2-phosphoglycerate and 3-phosphoglycerate. This Mycoplasmoides gallisepticum (strain R(low / passage 15 / clone 2)) (Mycoplasma gallisepticum) protein is 2,3-bisphosphoglycerate-independent phosphoglycerate mutase.